The following is a 206-amino-acid chain: Methylthioribulose-1-phosphate dehydratase (206 aa).

Zn(2+)-binding residues include His-96 and His-98.

The protein belongs to the aldolase class II family. MtnB subfamily. It depends on Zn(2+) as a cofactor.

The catalysed reaction is 5-(methylsulfanyl)-D-ribulose 1-phosphate = 5-methylsulfanyl-2,3-dioxopentyl phosphate + H2O. It functions in the pathway amino-acid biosynthesis; L-methionine biosynthesis via salvage pathway; L-methionine from S-methyl-5-thio-alpha-D-ribose 1-phosphate: step 2/6. In terms of biological role, catalyzes the dehydration of methylthioribulose-1-phosphate (MTRu-1-P) into 2,3-diketo-5-methylthiopentyl-1-phosphate (DK-MTP-1-P). This Exiguobacterium sibiricum (strain DSM 17290 / CCUG 55495 / CIP 109462 / JCM 13490 / 255-15) protein is Methylthioribulose-1-phosphate dehydratase.